The chain runs to 274 residues: Probable endonuclease LCL3 (274 aa).

The chain crosses the membrane as a helical span at residues 15 to 32; that stretch reads AVLSIILTGSTLTLIYTY. The region spanning 53 to 261 is the TNase-like domain; it reads HWLYGKVTSV…RSRKKGLWIQ (209 aa). Arg151 is an active-site residue. Asp156 provides a ligand contact to Ca(2+). Residues Glu159 and Arg199 contribute to the active site.

Belongs to the LCL3 family.

The protein localises to the mitochondrion. The protein resides in the membrane. The sequence is that of Probable endonuclease LCL3 (LCL3) from Saccharomyces cerevisiae (strain Lalvin EC1118 / Prise de mousse) (Baker's yeast).